Reading from the N-terminus, the 524-residue chain is Casein kinase I homolog 3 (524 aa).

In terms of domain architecture, Protein kinase spans 14–319 (YAVGPKIGEG…YLISLMDDAL (306 aa)). Residues 20–28 (IGEGSFGVI) and lysine 60 each bind ATP. Catalysis depends on aspartate 150, which acts as the Proton acceptor. Disordered regions lie at residues 352 to 414 (HGYG…KQQH) and 427 to 474 (PETH…EHNL). Positions 360–373 (RVNGNTARNNVNTN) are enriched in low complexity. Composition is skewed to polar residues over residues 374–413 (SKTRNTTPVATPKQQAQNSYNKDNSKSRISSNPQSFTKQQ) and 429–474 (THSN…EHNL). The YXXZ targeting signal motif lies at 444 to 447 (YDSI). Residues cysteine 517, cysteine 518, cysteine 519, cysteine 520, cysteine 522, cysteine 523, and cysteine 524 are each lipidated (S-palmitoyl cysteine).

Belongs to the protein kinase superfamily. CK1 Ser/Thr protein kinase family. Casein kinase I subfamily.

It is found in the cell membrane. Its subcellular location is the nucleus membrane. The protein resides in the vacuole membrane. It catalyses the reaction L-seryl-[protein] + ATP = O-phospho-L-seryl-[protein] + ADP + H(+). The catalysed reaction is L-threonyl-[protein] + ATP = O-phospho-L-threonyl-[protein] + ADP + H(+). Casein kinases are operationally defined by their preferential utilization of acidic proteins such as caseins as substrates. Phosphorylates MON1, inhibiting the guanine nucleotide exchange factor activity of the MON1-CCZ1 complex, possibly by preventing its recruitment to membranes by small GTPase RAB5 homologs. In Saccharomyces cerevisiae (strain ATCC 204508 / S288c) (Baker's yeast), this protein is Casein kinase I homolog 3 (YCK3).